Consider the following 130-residue polypeptide: Ribosome-binding factor A (130 aa).

This sequence belongs to the RbfA family. Monomer. Binds 30S ribosomal subunits, but not 50S ribosomal subunits or 70S ribosomes.

It is found in the cytoplasm. Functionally, one of several proteins that assist in the late maturation steps of the functional core of the 30S ribosomal subunit. Associates with free 30S ribosomal subunits (but not with 30S subunits that are part of 70S ribosomes or polysomes). Required for efficient processing of 16S rRNA. May interact with the 5'-terminal helix region of 16S rRNA. In Prochlorococcus marinus (strain SARG / CCMP1375 / SS120), this protein is Ribosome-binding factor A.